We begin with the raw amino-acid sequence, 89 residues long: Small ribosomal subunit protein uS17 (89 aa).

The protein belongs to the universal ribosomal protein uS17 family. In terms of assembly, part of the 30S ribosomal subunit.

In terms of biological role, one of the primary rRNA binding proteins, it binds specifically to the 5'-end of 16S ribosomal RNA. This chain is Small ribosomal subunit protein uS17, found in Coxiella burnetii (strain Dugway 5J108-111).